Reading from the N-terminus, the 125-residue chain is Large ribosomal subunit protein bL12 (125 aa).

Belongs to the bacterial ribosomal protein bL12 family. As to quaternary structure, homodimer. Part of the ribosomal stalk of the 50S ribosomal subunit. Forms a multimeric L10(L12)X complex, where L10 forms an elongated spine to which 2 to 4 L12 dimers bind in a sequential fashion. Binds GTP-bound translation factors.

In terms of biological role, forms part of the ribosomal stalk which helps the ribosome interact with GTP-bound translation factors. Is thus essential for accurate translation. The protein is Large ribosomal subunit protein bL12 of Campylobacter concisus (strain 13826).